Consider the following 313-residue polypeptide: Porphobilinogen deaminase 2 (313 aa).

Cys246 carries the S-(dipyrrolylmethanemethyl)cysteine modification.

Belongs to the HMBS family. As to quaternary structure, monomer. The cofactor is dipyrromethane.

The catalysed reaction is 4 porphobilinogen + H2O = hydroxymethylbilane + 4 NH4(+). Its pathway is porphyrin-containing compound metabolism; protoporphyrin-IX biosynthesis; coproporphyrinogen-III from 5-aminolevulinate: step 2/4. Functionally, tetrapolymerization of the monopyrrole PBG into the hydroxymethylbilane pre-uroporphyrinogen in several discrete steps. The chain is Porphobilinogen deaminase 2 (hemC2) from Streptomyces coelicolor (strain ATCC BAA-471 / A3(2) / M145).